The primary structure comprises 316 residues: MDWKLEGSTQKVESPVLQGQEGILEETGEDGLPEGFQLLQIDAEGECQEGEILATGSTAWCSKNVQRKQRHWEKIVAAKKSKRKQEKERRKANRAENPGICPQHSKRFLRALTKDKLLEAKHSGPRLCIDLSMTHYMSKKELSRLAGQIRRLYGSNKKADRPFWICLTGFTTDSPLYEECVRMNDGFSSYLLDITEEDCFSLFPLETLVYLTPDSEHALEDVDLNKVYILGGLVDESIQKKVTFQKAREYSVKTARLPIQEYMVRNQNGKNYHSEILAINQVFDILSTYLETHNWPEALKKGVSSGKGYILRNSVE.

Residues 73–97 are a coiled coil; sequence EKIVAAKKSKRKQEKERRKANRAEN. The segment at 77-98 is disordered; it reads AAKKSKRKQEKERRKANRAENP. The 198-residue stretch at 113 to 310 folds into the SAM-dependent MTase TRM10-type domain; that stretch reads TKDKLLEAKH…KGVSSGKGYI (198 aa).

This sequence belongs to the class IV-like SAM-binding methyltransferase superfamily. TRM10 family.

It carries out the reaction guanosine(9) in tRNA + S-adenosyl-L-methionine = N(1)-methylguanosine(9) in tRNA + S-adenosyl-L-homocysteine + H(+). Functionally, S-adenosyl-L-methionine-dependent guanine N(1)-methyltransferase that catalyzes the formation of N(1)-methylguanine at position 9 (m1G9) in tRNAs. Probably not able to catalyze formation of N(1)-methyladenine at position 9 (m1A9) in tRNAs. The sequence is that of tRNA methyltransferase 10 homolog B (TRMT10B) from Homo sapiens (Human).